The sequence spans 61 residues: Large ribosomal subunit protein uL30 (61 aa).

This sequence belongs to the universal ribosomal protein uL30 family. As to quaternary structure, part of the 50S ribosomal subunit.

The sequence is that of Large ribosomal subunit protein uL30 from Treponema pallidum subsp. pallidum (strain SS14).